A 742-amino-acid chain; its full sequence is Zinc transporter ZIP6 (742 aa).

The Extracellular segment spans residues 1–353 (MMTFLCTRSG…QRNTPVYIAW (353 aa)). N-linked (GlcNAc...) asparagine glycans are attached at residues N94 and N127. Disordered stretches follow at residues 148 to 182 (PVTTKKGDMDHSVEKSDPVPKAQPDPASGKKSQSD) and 191 to 210 (MNQESTTALTTPSYVTRSRR). Positions 152–165 (KKGDMDHSVEKSDP) are enriched in basic and acidic residues. Polar residues predominate over residues 192–206 (NQESTTALTTPSYVT). Residues N212, N232, and N237 are each glycosylated (N-linked (GlcNAc...) asparagine). The tract at residues 220-260 (TQDHASFSPSQPNVTHSNHTHHDEDTPTHQHDDHDEHEHAR) is disordered. Residues 222–236 (DHASFSPSQPNVTHS) show a composition bias toward polar residues. Over residues 239–260 (THHDEDTPTHQHDDHDEHEHAR) the composition is skewed to basic and acidic residues. N-linked (GlcNAc...) asparagine glycosylation is found at N267 and N337. The segment at 310-342 (EDEHSDHSHHHKHHHHHHDHQHLQHPHNHTNGR) is disordered. A compositionally biased stretch (basic residues) spans 316 to 339 (HSHHHKHHHHHHDHQHLQHPHNHT). A helical transmembrane segment spans residues 354-374 (LGGFLSITLISLLALVGVVLI). Topologically, residues 375-385 (PLMNRVCFNFL) are cytoplasmic. The chain crosses the membrane as a helical span at residues 386–406 (LSFLVALAVGTLSGDALLHLI). Residues 407–430 (PHSQGHHHHGHSEEHAEEEDSLRP) lie on the Extracellular side of the membrane. A helical transmembrane segment spans residues 431 to 451 (VWTGLTALSGVYIMFLIEHFL). Topologically, residues 452 to 644 (TLGKMYKDKN…LKAGMSVRQA (193 aa)) are cytoplasmic. A helical transmembrane segment spans residues 645–665 (MLYNLLSALMGYLGMIIGILI). At 666–671 (GHYAEN) the chain is on the extracellular side. Residues 672–692 (VATWIFALTAGLFMYVALVDM) form a helical membrane-spanning segment. Residues 693 to 710 (VPEMLHNDASEAGFSHYG) are Cytoplasmic-facing. The helical transmembrane segment at 711–731 (FFLLQNAGILLGFGIMLIIAV) threads the bilayer. Over 732-742 (FEDRIQLDLGY) the chain is Extracellular.

It belongs to the ZIP transporter (TC 2.A.5) family. Cleaved on the N-terminus before locating to the plasma membrane. In terms of processing, N-glycosylated.

It localises to the cell membrane. It catalyses the reaction Zn(2+)(in) = Zn(2+)(out). Acts as a zinc-influx transporter which plays a role in zinc homeostasis and in the induction of epithelial-to-mesenchymal transition (EMT). This Danio rerio (Zebrafish) protein is Zinc transporter ZIP6.